We begin with the raw amino-acid sequence, 59 residues long: UPF0337 protein PP_4561 (59 aa).

Residues 27–43 are compositionally biased toward basic and acidic residues; that stretch reads TDNEKLRAEGKAQELKG. The disordered stretch occupies residues 27-59; sequence TDNEKLRAEGKAQELKGEAQQVKGNVKDAVKKP.

It belongs to the UPF0337 (CsbD) family.

The polypeptide is UPF0337 protein PP_4561 (Pseudomonas putida (strain ATCC 47054 / DSM 6125 / CFBP 8728 / NCIMB 11950 / KT2440)).